The following is a 310-amino-acid chain: MKTLIRKFSRTAITVVLVILAFIAIFNAWVYYTESPWTRDARFSADVVAIAPDVSGLITQVNVHDNQLVKKGQVLFIIDQPRYQKALEEAQADVAYYQVLAQEKRQEAGRRNRLGVQAMSREEIDQANNVLQTVLHQLAKAQATRDLAKLDLERTVIRAPADGWVTNLNVYTGEFITRGSTAVALVKQNSFYVLAYMEETKLEGVRPGYRAEITPLGSNKVLKGTVDSVAAGVTNASSTRDDKGMATIDSNLEWVRLAQRVPVRIRLDNQQENIWPAGTTATVVVTGKQDRDESQDSFFRKMAHRLREFG.

A helical transmembrane segment spans residues 12 to 32; the sequence is AITVVLVILAFIAIFNAWVYY.

This sequence belongs to the membrane fusion protein (MFP) (TC 8.A.1) family.

The protein resides in the cell inner membrane. In terms of biological role, forms an efflux pump with AaeB. The sequence is that of p-hydroxybenzoic acid efflux pump subunit AaeA from Escherichia coli O7:K1 (strain IAI39 / ExPEC).